A 147-amino-acid polypeptide reads, in one-letter code: Prefoldin subunit alpha (147 aa).

It belongs to the prefoldin alpha subunit family. Heterohexamer of two alpha and four beta subunits.

The protein localises to the cytoplasm. In terms of biological role, molecular chaperone capable of stabilizing a range of proteins. Seems to fulfill an ATP-independent, HSP70-like function in archaeal de novo protein folding. This is Prefoldin subunit alpha from Thermococcus onnurineus (strain NA1).